A 485-amino-acid polypeptide reads, in one-letter code: Glutamyl-tRNA(Gln) amidotransferase subunit A (485 aa).

Catalysis depends on charge relay system residues Lys78 and Ser153. The active-site Acyl-ester intermediate is Ser177.

The protein belongs to the amidase family. GatA subfamily. Heterotrimer of A, B and C subunits.

The enzyme catalyses L-glutamyl-tRNA(Gln) + L-glutamine + ATP + H2O = L-glutaminyl-tRNA(Gln) + L-glutamate + ADP + phosphate + H(+). In terms of biological role, allows the formation of correctly charged Gln-tRNA(Gln) through the transamidation of misacylated Glu-tRNA(Gln) in organisms which lack glutaminyl-tRNA synthetase. The reaction takes place in the presence of glutamine and ATP through an activated gamma-phospho-Glu-tRNA(Gln). This chain is Glutamyl-tRNA(Gln) amidotransferase subunit A, found in Bacillus cereus (strain G9842).